The primary structure comprises 98 residues: RING finger protein Z (98 aa).

Residues M1–Q10 show a composition bias toward basic and acidic residues. The disordered stretch occupies residues M1–L26. A lipid anchor (N-myristoyl glycine; by host) is attached at G2. Residues Y11–A23 are compositionally biased toward polar residues. Residues C41–C77 form an RING-type; atypical zinc finger. Residues P91–P94 carry the PTAP/PSAP motif motif.

It belongs to the arenaviridae Z protein family. Interacts with protein NP; this interaction probably directs the encapsidated genome to budding sites. Interacts (via RING domain) with polymerase L; this interaction inhibits viral transcription and replication, Z partially blocks the product exit tunnel for the releasing nascent RNA product. Interacts with the glycoprotein complex; this interaction plays a role in virion budding. Interacts with host eIF4E; this interaction results in eIF4E reduced affinity for its substrate, the 5'-m7 G cap structure. Interacts (via late-budding domain) with host TSG101; this interaction is essential for budding and release of viral particles. Interacts with host RPLP0; this interaction may serve to load ribosome-like particles inside the virion. Interacts with host PML; this interaction induces PML bodies redistribution in the cytoplasm upon viral infection. Post-translationally, myristoylation is required for the role of RING finger protein Z in assembly and budding.

The protein localises to the virion. The protein resides in the host cytoplasm. It is found in the host perinuclear region. It localises to the host cell membrane. In terms of biological role, plays a crucial role in virion assembly and budding. Expressed late in the virus life cycle, it acts as an inhibitor of viral transcription and RNA synthesis by interacting with the viral polymerase L. Presumably recruits the NP encapsidated genome to cellular membranes at budding sites via direct interaction with NP. Plays critical roles in the final steps of viral release by interacting with host TSG101, a member of the vacuolar protein-sorting pathway and using other cellular host proteins involved in vesicle formation pathway. The budding of the virus progeny occurs after association of protein Z with the viral glycoprotein complex SSP-GP1-GP2 at the cell periphery, step that requires myristoylation of protein Z. Also selectively represses protein production by associating with host eIF4E. In cell-based minigenome assay, has an inhibitory effect on the ribonucleoprotein machinery (vRNP), which is responsible for the replication and transcription of the viral genome. This Chapare mammarenavirus (isolate Human/Bolivia/810419/2003) protein is RING finger protein Z.